The sequence spans 202 residues: Small ribosomal subunit protein uS4c (202 aa).

The S4 RNA-binding domain occupies 90–154; sequence MRLDNIIFRL…SQSIITKNLN (65 aa).

It belongs to the universal ribosomal protein uS4 family. In terms of assembly, part of the 30S ribosomal subunit. Contacts protein S5. The interaction surface between S4 and S5 is involved in control of translational fidelity.

It localises to the plastid. The protein resides in the chloroplast. One of the primary rRNA binding proteins, it binds directly to 16S rRNA where it nucleates assembly of the body of the 30S subunit. Functionally, with S5 and S12 plays an important role in translational accuracy. This Ricciocarpos natans (Liverwort) protein is Small ribosomal subunit protein uS4c (rps4).